A 124-amino-acid chain; its full sequence is Schlafen-like protein (124 aa).

The protein belongs to the Schlafen family. Subgroup poxviridae B3 subfamily.

In Homo sapiens (Human), this protein is Schlafen-like protein.